We begin with the raw amino-acid sequence, 429 residues long: Histidine--tRNA ligase (429 aa).

Belongs to the class-II aminoacyl-tRNA synthetase family. Homodimer.

The protein resides in the cytoplasm. The catalysed reaction is tRNA(His) + L-histidine + ATP = L-histidyl-tRNA(His) + AMP + diphosphate + H(+). The sequence is that of Histidine--tRNA ligase from Cyanothece sp. (strain PCC 7425 / ATCC 29141).